Reading from the N-terminus, the 452-residue chain is Phosphatidylinositol N-acetylglucosaminyltransferase GPI3 subunit (452 aa).

The helical transmembrane segment at 407–427 (LYLLCGIVEYMLFFLLEWLYP) threads the bilayer.

The protein belongs to the glycosyltransferase group 1 family. In terms of assembly, component of the phosphatidylinositol N-acetylglucosaminyltransferase complex composed of at least GPI1, GPI2, GPI3, GPI15, GPI19 and ERI1.

It localises to the endoplasmic reticulum membrane. It catalyses the reaction a 1,2-diacyl-sn-glycero-3-phospho-(1D-myo-inositol) + UDP-N-acetyl-alpha-D-glucosamine = a 6-(N-acetyl-alpha-D-glucosaminyl)-1-(1,2-diacyl-sn-glycero-3-phospho)-1D-myo-inositol + UDP + H(+). It functions in the pathway glycolipid biosynthesis; glycosylphosphatidylinositol-anchor biosynthesis. With respect to regulation, inhibited by Ras, probably via the interaction between RAS2 and ERI1. Its function is as follows. Catalytic subunit in the complex catalyzing the transfer of N-acetylglucosamine from UDP-N-acetylglucosamine to phosphatidylinositol, the first step of GPI biosynthesis. The sequence is that of Phosphatidylinositol N-acetylglucosaminyltransferase GPI3 subunit (SPT14) from Saccharomyces cerevisiae (strain RM11-1a) (Baker's yeast).